Here is a 345-residue protein sequence, read N- to C-terminus: Phosphoribosylformylglycinamidine cyclo-ligase (345 aa).

Belongs to the AIR synthase family.

The protein localises to the cytoplasm. The catalysed reaction is 2-formamido-N(1)-(5-O-phospho-beta-D-ribosyl)acetamidine + ATP = 5-amino-1-(5-phospho-beta-D-ribosyl)imidazole + ADP + phosphate + H(+). It functions in the pathway purine metabolism; IMP biosynthesis via de novo pathway; 5-amino-1-(5-phospho-D-ribosyl)imidazole from N(2)-formyl-N(1)-(5-phospho-D-ribosyl)glycinamide: step 2/2. The protein is Phosphoribosylformylglycinamidine cyclo-ligase of Enterobacter sp. (strain 638).